The chain runs to 140 residues: Large ribosomal subunit protein bL17 (140 aa).

The segment at Asp-119 to Ala-140 is disordered.

The protein belongs to the bacterial ribosomal protein bL17 family. As to quaternary structure, part of the 50S ribosomal subunit. Contacts protein L32.

The protein is Large ribosomal subunit protein bL17 of Zymomonas mobilis subsp. mobilis (strain ATCC 31821 / ZM4 / CP4).